Consider the following 130-residue polypeptide: MRHRKSGRQLNRNSSHRQAMFRNMASSLVRHEVIKTTVAKAKELRRVVEPLITLAKSDSVANRRLAFARTRDAEVVGKLFNELGPRYQERPGGYTRILKCGLRTGDKAPMAYIELVGRPEAAEAVEEAAE.

This sequence belongs to the bacterial ribosomal protein bL17 family. In terms of assembly, part of the 50S ribosomal subunit. Contacts protein L32.

The sequence is that of Large ribosomal subunit protein bL17 from Shewanella loihica (strain ATCC BAA-1088 / PV-4).